Reading from the N-terminus, the 399-residue chain is Tryptophan synthase beta chain (399 aa).

Lys92 is subject to N6-(pyridoxal phosphate)lysine.

Belongs to the TrpB family. In terms of assembly, tetramer of two alpha and two beta chains. Pyridoxal 5'-phosphate is required as a cofactor.

It carries out the reaction (1S,2R)-1-C-(indol-3-yl)glycerol 3-phosphate + L-serine = D-glyceraldehyde 3-phosphate + L-tryptophan + H2O. Its pathway is amino-acid biosynthesis; L-tryptophan biosynthesis; L-tryptophan from chorismate: step 5/5. Functionally, the beta subunit is responsible for the synthesis of L-tryptophan from indole and L-serine. This chain is Tryptophan synthase beta chain, found in Legionella pneumophila (strain Corby).